We begin with the raw amino-acid sequence, 235 residues long: Uridylate kinase (235 aa).

9-12 (KLSG) serves as a coordination point for ATP. Residue Gly51 participates in UMP binding. Residues Gly52 and Arg56 each coordinate ATP. UMP is bound by residues Asp71 and 132 to 139 (TGNPYFTT). ATP-binding residues include Thr159, Tyr165, and Asp168.

It belongs to the UMP kinase family. In terms of assembly, homohexamer.

Its subcellular location is the cytoplasm. The enzyme catalyses UMP + ATP = UDP + ADP. It functions in the pathway pyrimidine metabolism; CTP biosynthesis via de novo pathway; UDP from UMP (UMPK route): step 1/1. Inhibited by UTP. Functionally, catalyzes the reversible phosphorylation of UMP to UDP. This Christiangramia forsetii (strain DSM 17595 / CGMCC 1.15422 / KT0803) (Gramella forsetii) protein is Uridylate kinase.